Consider the following 453-residue polypeptide: Chromosomal replication initiator protein DnaA (453 aa).

Residues 1 to 73 form a domain I, interacts with DnaA modulators region; sequence MNISPQYLWN…AQEVASVVGY (73 aa). Residues 73–112 are domain II; the sequence is YPVDIQLTTAEGETMAMTGEAQSYQEKSLTQIAPESPKLN. Positions 113 to 329 are domain III, AAA+ region; sequence QLNPRYTFSR…GALIRAIAYT (217 aa). G157, G159, K160, and T161 together coordinate ATP. The segment at 330-453 is domain IV, binds dsDNA; sequence SISGLSMTVQ…RINMASRTQS (124 aa).

It belongs to the DnaA family. In terms of assembly, oligomerizes as a right-handed, spiral filament on DNA at oriC.

It is found in the cytoplasm. Its function is as follows. Plays an essential role in the initiation and regulation of chromosomal replication. ATP-DnaA binds to the origin of replication (oriC) to initiate formation of the DNA replication initiation complex once per cell cycle. Binds the DnaA box (a 9 base pair repeat at the origin) and separates the double-stranded (ds)DNA. Forms a right-handed helical filament on oriC DNA; dsDNA binds to the exterior of the filament while single-stranded (ss)DNA is stabiized in the filament's interior. The ATP-DnaA-oriC complex binds and stabilizes one strand of the AT-rich DNA unwinding element (DUE), permitting loading of DNA polymerase. After initiation quickly degrades to an ADP-DnaA complex that is not apt for DNA replication. Binds acidic phospholipids. The polypeptide is Chromosomal replication initiator protein DnaA (Rippkaea orientalis (strain PCC 8801 / RF-1) (Cyanothece sp. (strain PCC 8801))).